The primary structure comprises 322 residues: Transmembrane protein 171 (322 aa).

Transmembrane regions (helical) follow at residues 22–42 (IFFL…LSIF), 57–77 (IVLK…VILA), 112–132 (LIFG…GIWV), and 159–179 (FLSL…FFVV). Residues 223–322 (PPPYFPESSA…LGAPSDASPP (100 aa)) are disordered. Low complexity predominate over residues 228 to 241 (PESSAAAPSPGANS). 2 stretches are compositionally biased toward polar residues: residues 242–267 (LHQI…NQGA) and 279–289 (ISGQGSSSERS).

Its subcellular location is the membrane. This chain is Transmembrane protein 171 (Tmem171), found in Mus musculus (Mouse).